Reading from the N-terminus, the 101-residue chain is Small ubiquitin-related modifier 1 (101 aa).

Position 2 is an N-acetylserine (S2). S2 carries the phosphoserine modification. K7 is covalently cross-linked (Glycyl lysine isopeptide (Lys-Gly) (interchain with G-Cter in SUMO1); alternate). Residue K7 forms a Glycyl lysine isopeptide (Lys-Gly) (interchain with G-Cter in SUMO2); alternate linkage. S9 carries the post-translational modification Phosphoserine. Glycyl lysine isopeptide (Lys-Gly) (interchain with G-Cter in SUMO2) cross-links involve residues K16, K17, and K23. The interval 16–25 is (Microbial infection) Interaction with Tula hantavirus; it reads KKEGEYIKLK. In terms of domain architecture, Ubiquitin-like spans 20–97; the sequence is EYIKLKVIGQ…IEVYQEQTGG (78 aa). A Glycyl lysine isopeptide (Lys-Gly) (interchain with G-Cter in SUMO1) cross-link involves residue K25. The residue at position 32 (S32) is a Phosphoserine. Residues K37, K39, K45, and K46 each participate in a glycyl lysine isopeptide (Lys-Gly) (interchain with G-Cter in SUMO2) cross-link. Residues 37-40 are (Microbial infection) Interaction with Tula hantavirus; that stretch reads KVKM. Residue G97 forms a Glycyl lysine isopeptide (Gly-Lys) (interchain with K-? in acceptor proteins) linkage. Residues 98 to 101 constitute a propeptide that is removed on maturation; sequence HSTV.

It belongs to the ubiquitin family. SUMO subfamily. Covalently attached to KCNB1; UBE2I increases cross-linking with KCNB1 and PIAS1 decreases cross-links with KCNB1. Interacts with SAE2, RANBP2, PIAS1 and PIAS2. Interacts with PRKN. Covalently attached to a number of proteins such as IKFZ1, PML, RANGAP1, HIPK2, SP100, p53, p73-alpha, MDM2, JUN, DNMT3B and TDG. Also interacts with HIF1A, HIPK2, HIPK3, CHD3, EXOSC9, RAD51 and RAD52. Interacts with USP25 (via ts SIM domain); the interaction weakly sumoylates USP25. Interacts with SIMC1, CASP8AP2, RNF111 and SOBP (via SIM domains). Interacts with BHLHE40/DEC1. Interacts with RWDD3. Interacts with UBE2I/UBC9 and this interaction is enhanced in the presence of RWDD3. Interacts with MTA1. Interacts with SENP2. Interacts with HINT1. In terms of assembly, (Microbial infection) Interacts with Epstein-barr virus BGLF4. As to quaternary structure, (Microbial infection) Interacts (via N-terminus) with Tula hantavirus nucleoprotein. (Microbial infection) Interacts (via N-terminus) with Hantaan hantavirus nucleoprotein. Post-translationally, cleavage of precursor form by SENP1 or SENP2 is necessary for function. Polymeric SUMO1 chains undergo polyubiquitination by RNF4.

The protein resides in the nucleus membrane. The protein localises to the nucleus speckle. It localises to the cytoplasm. Its subcellular location is the nucleus. It is found in the PML body. The protein resides in the cell membrane. Ubiquitin-like protein that can be covalently attached to proteins as a monomer or a lysine-linked polymer. Covalent attachment via an isopeptide bond to its substrates requires prior activation by the E1 complex SAE1-SAE2 and linkage to the E2 enzyme UBE2I, and can be promoted by E3 ligases such as PIAS1-4, RANBP2 or CBX4. This post-translational modification on lysine residues of proteins plays a crucial role in a number of cellular processes such as nuclear transport, DNA replication and repair, mitosis and signal transduction. Involved for instance in targeting RANGAP1 to the nuclear pore complex protein RANBP2. Covalently attached to the voltage-gated potassium channel KCNB1; this modulates the gating characteristics of KCNB1. Polymeric SUMO1 chains are also susceptible to polyubiquitination which functions as a signal for proteasomal degradation of modified proteins. May also regulate a network of genes involved in palate development. Covalently attached to ZFHX3. In Homo sapiens (Human), this protein is Small ubiquitin-related modifier 1 (SUMO1).